Reading from the N-terminus, the 452-residue chain is cAMP/cGMP-dependent 3',5'-cAMP/cGMP phosphodiesterase A (452 aa).

The signal sequence occupies residues 1–23; it reads MALNKKLISLLLLIFIILNIVNS. A propeptide spanning residues 24–49 is cleaved from the precursor; that stretch reads HQQEDCDDDDEDIGISAERSERRSVK. N101, N141, and N277 each carry an N-linked (GlcNAc...) asparagine glycan.

Belongs to the cyclic nucleotide phosphodiesterase class-II family.

It localises to the secreted. The protein localises to the extracellular space. It is found in the cell surface. The catalysed reaction is 3',5'-cyclic AMP + H2O = AMP + H(+). It carries out the reaction 3',5'-cyclic GMP + H2O = GMP + H(+). Its activity is regulated as follows. Inhibited by dithiotreitol (DTT). Phosphodiesterase which displays a preference for cAMP over cGMP. Involved in the degradation of extracellular cAMP. Maintains the responsiveness of cells to the chemoattractant cAMP during the aggregation phase of development. This Dictyostelium discoideum (Social amoeba) protein is cAMP/cGMP-dependent 3',5'-cAMP/cGMP phosphodiesterase A (pdsA).